The primary structure comprises 373 residues: Protein-glutamate methylesterase/protein-glutamine glutaminase 1 (373 aa).

The region spanning 16 to 133 (RVVVVDDSAL…ASGLTELSDQ (118 aa)) is the Response regulatory domain. D67 is modified (4-aspartylphosphate). The CheB-type methylesterase domain maps to 175–367 (RVSTEKLICI…PALIAKLSSA (193 aa)). Residues S187, H213, and D309 contribute to the active site.

The protein belongs to the CheB family. Phosphorylated by CheA. Phosphorylation of the N-terminal regulatory domain activates the methylesterase activity.

Its subcellular location is the cytoplasm. The enzyme catalyses [protein]-L-glutamate 5-O-methyl ester + H2O = L-glutamyl-[protein] + methanol + H(+). It catalyses the reaction L-glutaminyl-[protein] + H2O = L-glutamyl-[protein] + NH4(+). Functionally, involved in chemotaxis. Part of a chemotaxis signal transduction system that modulates chemotaxis in response to various stimuli. Catalyzes the demethylation of specific methylglutamate residues introduced into the chemoreceptors (methyl-accepting chemotaxis proteins or MCP) by CheR. Also mediates the irreversible deamidation of specific glutamine residues to glutamic acid. The polypeptide is Protein-glutamate methylesterase/protein-glutamine glutaminase 1 (Albidiferax ferrireducens (strain ATCC BAA-621 / DSM 15236 / T118) (Rhodoferax ferrireducens)).